The following is a 226-amino-acid chain: Imidazole glycerol phosphate synthase subunit HisH (226 aa).

The Glutamine amidotransferase type-1 domain maps to 6–214; sequence NIALVDYGVG…VERAASRSAA (209 aa). The Nucleophile role is filled by cysteine 84. Catalysis depends on residues histidine 189 and glutamate 191.

In terms of assembly, heterodimer of HisH and HisF.

It is found in the cytoplasm. The enzyme catalyses 5-[(5-phospho-1-deoxy-D-ribulos-1-ylimino)methylamino]-1-(5-phospho-beta-D-ribosyl)imidazole-4-carboxamide + L-glutamine = D-erythro-1-(imidazol-4-yl)glycerol 3-phosphate + 5-amino-1-(5-phospho-beta-D-ribosyl)imidazole-4-carboxamide + L-glutamate + H(+). It carries out the reaction L-glutamine + H2O = L-glutamate + NH4(+). It functions in the pathway amino-acid biosynthesis; L-histidine biosynthesis; L-histidine from 5-phospho-alpha-D-ribose 1-diphosphate: step 5/9. Its function is as follows. IGPS catalyzes the conversion of PRFAR and glutamine to IGP, AICAR and glutamate. The HisH subunit catalyzes the hydrolysis of glutamine to glutamate and ammonia as part of the synthesis of IGP and AICAR. The resulting ammonia molecule is channeled to the active site of HisF. The chain is Imidazole glycerol phosphate synthase subunit HisH from Gloeobacter violaceus (strain ATCC 29082 / PCC 7421).